We begin with the raw amino-acid sequence, 478 residues long: Centromere DNA-binding protein complex CBF3 subunit C (478 aa).

The disordered stretch occupies residues Glu206 to Thr251. Residues Gly217–Ile230 are compositionally biased toward polar residues. Basic residues predominate over residues Lys231–Arg240.

Component of the CBF3 copmplex, which is formed of CBF3A/CBF2, CBF3B/CEP3, CBF3C/CTF13 and CBF3D. CBF3C interacts with CBF3D and SGT1.

The protein resides in the nucleus. It localises to the chromosome. Its subcellular location is the centromere. Acts as a central component of the centromere DNA-binding protein complex CBF3, which is essential for chromosome segregation and movement of centromeres along microtubules. CBF3 is required for the recruitment of other kinetochore complexes to CEN DNA. It plays a role in the attachment of chromosomes to the spindle and binds selectively to a highly conserved DNA sequence called CDEIII, found in centromers and in several promoters. The association of CBF3C with CBF3D and SGT1 is required for CBF3C activation and CBF3 assembly. In Saccharomyces cerevisiae (strain ATCC 204508 / S288c) (Baker's yeast), this protein is Centromere DNA-binding protein complex CBF3 subunit C (CTF13).